Here is a 194-residue protein sequence, read N- to C-terminus: E3 ubiquitin-protein ligase RNF4 (194 aa).

Positions 1–12 are enriched in basic residues; it reads MSTRNPQRKRRG. The segment at 1-20 is required for ubiquitination activity; that stretch reads MSTRNPQRKRRGGTVNSRQT. Positions 1–39 are disordered; the sequence is MSTRNPQRKRRGGTVNSRQTQKRTRETTSTPEVSLETEP. Residues 6 to 65 are mediates interaction with TRPS1; sequence PQRKRRGGTVNSRQTQKRTRETTSTPEVSLETEPIELVETVGDEIVDLTCESLEPVVVDL. Residues 40–43 carry the SUMO interaction motif 1; mediates the binding to polysumoylated substrates motif; it reads IELV. Positions 50–53 match the SUMO interaction motif 2; mediates the binding to polysumoylated substrates motif; that stretch reads IVDL. Residues 61 to 63 carry the SUMO interaction motif 3; mediates the binding to polysumoylated substrates motif; sequence VVV. An SUMO interaction motif 4; mediates the binding to polysumoylated substrates motif is present at residues 71-74; the sequence is VVIV. A phosphoserine mark is found at serine 98 and serine 99. Positions 110–130 are disordered; that stretch reads VYVTTHTPRSTKDDGATGPRP. Residues cysteine 136, cysteine 139, cysteine 158, histidine 160, cysteine 163, cysteine 166, cysteine 177, and cysteine 180 each coordinate Zn(2+). The RING-type zinc finger occupies 136–181; sequence CPICMDGYSEIVQNGRLIVSTECGHVFCSQCLRDSLKNANTCPTCR.

In terms of assembly, homodimer (via RING-type zinc finger domain). Interacts with GSC2. Interacts with AR/the androgen receptor and TBP. Interacts with TCF20. Interacts with PATZ1. Interacts with TRPS1; negatively regulates TRPS1 transcriptional repressor activity. Interacts with PML (isoform PML-1, isoform PML-2, isoform PML-3, isoform PML-4, isoform PML-5 and isoform PML-6). Interacts with PRDM1/Blimp-1. In terms of processing, sumoylated; conjugated by one or two SUMO1 moieties. Autoubiquitinated. As to expression, in the embryo, expressed primarily in the developing nervous system with strong expression in the dorsal root ganglia and gonads. Ubiquitously expressed in the adult.

The protein localises to the cytoplasm. It localises to the nucleus. Its subcellular location is the PML body. The catalysed reaction is S-ubiquitinyl-[E2 ubiquitin-conjugating enzyme]-L-cysteine + [acceptor protein]-L-lysine = [E2 ubiquitin-conjugating enzyme]-L-cysteine + N(6)-ubiquitinyl-[acceptor protein]-L-lysine.. It participates in protein modification; protein ubiquitination. In terms of biological role, E3 ubiquitin-protein ligase which binds polysumoylated chains covalently attached to proteins and mediates 'Lys-6'-, 'Lys-11'-, 'Lys-48'- and 'Lys-63'-linked polyubiquitination of those substrates and their subsequent targeting to the proteasome for degradation. Regulates the degradation of several proteins including PML and the transcriptional activator PEA3. Involved in chromosome alignment and spindle assembly, it regulates the kinetochore CENPH-CENPI-CENPK complex by targeting polysumoylated CENPI to proteasomal degradation. Regulates the cellular responses to hypoxia and heat shock through degradation of respectively EPAS1 and PARP1. Alternatively, it may also bind DNA/nucleosomes and have a more direct role in the regulation of transcription for instance enhancing basal transcription and steroid receptor-mediated transcriptional activation. Catalyzes ubiquitination of sumoylated PARP1 in response to PARP1 trapping to chromatin, leading to PARP1 removal from chromatin by VCP/p97. The chain is E3 ubiquitin-protein ligase RNF4 from Mus musculus (Mouse).